Reading from the N-terminus, the 488-residue chain is 6-phosphogluconate dehydrogenase, decarboxylating (488 aa).

NADP(+) is bound by residues 9–14, 32–34, 74–76, and asparagine 102; these read GLAVMG, NRT, and VKA. Substrate contacts are provided by residues asparagine 102 and 128–130; that span reads SGG. The active-site Proton acceptor is the lysine 183. 186–187 contacts substrate; sequence HN. Glutamate 190 (proton donor) is an active-site residue. Substrate contacts are provided by tyrosine 191, lysine 260, arginine 287, arginine 451, and histidine 457.

Belongs to the 6-phosphogluconate dehydrogenase family. In terms of assembly, homodimer.

The catalysed reaction is 6-phospho-D-gluconate + NADP(+) = D-ribulose 5-phosphate + CO2 + NADPH. The protein operates within carbohydrate degradation; pentose phosphate pathway; D-ribulose 5-phosphate from D-glucose 6-phosphate (oxidative stage): step 3/3. Catalyzes the oxidative decarboxylation of 6-phosphogluconate to ribulose 5-phosphate and CO(2), with concomitant reduction of NADP to NADPH. The protein is 6-phosphogluconate dehydrogenase, decarboxylating (gnd) of Treponema pallidum (strain Nichols).